The following is an 804-amino-acid chain: Phenylalanine--tRNA ligase beta subunit (804 aa).

Residues 38–148 form the tRNA-binding domain; that stretch reads RSSLKGFVIA…EDAPIGGLFA (111 aa). The B5 domain occupies 401-476; that stretch reads PEIKQIAFPF…RIYGLDKIEP (76 aa). The Mg(2+) site is built by Asp454, Asp460, Glu463, and Glu464. An FDX-ACB domain is found at 710–803; the sequence is SPFQMVRRDF…VTKATGAYLR (94 aa).

It belongs to the phenylalanyl-tRNA synthetase beta subunit family. Type 1 subfamily. Tetramer of two alpha and two beta subunits. Requires Mg(2+) as cofactor.

The protein localises to the cytoplasm. It carries out the reaction tRNA(Phe) + L-phenylalanine + ATP = L-phenylalanyl-tRNA(Phe) + AMP + diphosphate + H(+). The sequence is that of Phenylalanine--tRNA ligase beta subunit from Bartonella quintana (strain Toulouse) (Rochalimaea quintana).